Reading from the N-terminus, the 106-residue chain is Urease subunit beta (106 aa).

It belongs to the urease beta subunit family. Heterotrimer of UreA (gamma), UreB (beta) and UreC (alpha) subunits. Three heterotrimers associate to form the active enzyme.

It is found in the cytoplasm. The enzyme catalyses urea + 2 H2O + H(+) = hydrogencarbonate + 2 NH4(+). The protein operates within nitrogen metabolism; urea degradation; CO(2) and NH(3) from urea (urease route): step 1/1. This Alkalilimnicola ehrlichii (strain ATCC BAA-1101 / DSM 17681 / MLHE-1) protein is Urease subunit beta.